The sequence spans 343 residues: N-acetyl-gamma-glutamyl-phosphate reductase (343 aa).

The active site involves C147.

This sequence belongs to the NAGSA dehydrogenase family. Type 1 subfamily.

The protein resides in the cytoplasm. It carries out the reaction N-acetyl-L-glutamate 5-semialdehyde + phosphate + NADP(+) = N-acetyl-L-glutamyl 5-phosphate + NADPH + H(+). The protein operates within amino-acid biosynthesis; L-arginine biosynthesis; N(2)-acetyl-L-ornithine from L-glutamate: step 3/4. Functionally, catalyzes the NADPH-dependent reduction of N-acetyl-5-glutamyl phosphate to yield N-acetyl-L-glutamate 5-semialdehyde. This is N-acetyl-gamma-glutamyl-phosphate reductase from Listeria monocytogenes serovar 1/2a (strain ATCC BAA-679 / EGD-e).